The primary structure comprises 101 residues: RNA-binding protein Hfq (101 aa).

Residues 9-68 (DPFLNALRRERVPVSIYLVNGIKLQGQVESFDQFVILLKNTVSQMVYKHAISTVVPSRPV) enclose the Sm domain. The disordered stretch occupies residues 63 to 101 (VPSRPVSHHSNTPSGSTNNYHGSNPSAPQQPQQDSDDAE). Positions 70–86 (HHSNTPSGSTNNYHGSN) are enriched in polar residues.

Belongs to the Hfq family. Homohexamer.

Functionally, RNA chaperone that binds small regulatory RNA (sRNAs) and mRNAs to facilitate mRNA translational regulation in response to envelope stress, environmental stress and changes in metabolite concentrations. Also binds with high specificity to tRNAs. The chain is RNA-binding protein Hfq from Yersinia pseudotuberculosis serotype O:1b (strain IP 31758).